The sequence spans 453 residues: uncharacterized protein (453 aa).

In terms of biological role, the presence of the two linear plasmids, termed pGKL1 and pGKL2, in strains of Kluyveromyces lactis confers the killer phenotype to the host cell, by promoting the secretion of a toxin able to inhibit the growth of sensitive strains. This is an uncharacterized protein from Kluyveromyces lactis (strain ATCC 8585 / CBS 2359 / DSM 70799 / NBRC 1267 / NRRL Y-1140 / WM37) (Yeast).